Consider the following 1342-residue polypeptide: DNA-directed RNA polymerase subunit beta (1342 aa).

This sequence belongs to the RNA polymerase beta chain family. The RNAP catalytic core consists of 2 alpha, 1 beta, 1 beta' and 1 omega subunit. When a sigma factor is associated with the core the holoenzyme is formed, which can initiate transcription.

It carries out the reaction RNA(n) + a ribonucleoside 5'-triphosphate = RNA(n+1) + diphosphate. Its function is as follows. DNA-dependent RNA polymerase catalyzes the transcription of DNA into RNA using the four ribonucleoside triphosphates as substrates. This chain is DNA-directed RNA polymerase subunit beta, found in Yersinia enterocolitica serotype O:8 / biotype 1B (strain NCTC 13174 / 8081).